The primary structure comprises 287 residues: Inorganic pyrophosphatase (287 aa).

Residue R79 coordinates diphosphate. Residues D116, D121, and D153 each contribute to the Mg(2+) site.

This sequence belongs to the PPase family. Requires Mg(2+) as cofactor.

Its subcellular location is the cytoplasm. It carries out the reaction diphosphate + H2O = 2 phosphate + H(+). The sequence is that of Inorganic pyrophosphatase (IPP1) from Debaryomyces hansenii (strain ATCC 36239 / CBS 767 / BCRC 21394 / JCM 1990 / NBRC 0083 / IGC 2968) (Yeast).